The sequence spans 520 residues: Probable E3 ubiquitin-protein ligase XBOS33 (520 aa).

ANK repeat units follow at residues 44 to 73, 77 to 106, 111 to 140, 185 to 214, and 228 to 258; these read GLNSPLHFAAAKGHLDIVTLLLEKGADVNV, CGQTALMHACRHGHWEVVQMLLLFRCNVTR, SGRTALHFAAHDGLVRCVRLLLADFVPSAP, GGVTALHMAALNGHFDCMQLLIDLGANVSA, and AGSTPLHYAAGGGNAECCQLLLSKGASKLTL. The RING-type zinc-finger motif lies at 327–377; sequence CAVCLERSCSVAAEGCCHEFCIKCALYLCSTSNTRVEFTGPPGSIPCPLCR. Polar residues predominate over residues 467 to 479; it reads QDGSEVQSPQPSH. The interval 467–493 is disordered; it reads QDGSEVQSPQPSHCASMEMDKREQQDL. A compositionally biased stretch (basic and acidic residues) spans 484 to 493; it reads EMDKREQQDL.

The enzyme catalyses S-ubiquitinyl-[E2 ubiquitin-conjugating enzyme]-L-cysteine + [acceptor protein]-L-lysine = [E2 ubiquitin-conjugating enzyme]-L-cysteine + N(6)-ubiquitinyl-[acceptor protein]-L-lysine.. It participates in protein modification; protein ubiquitination. This Oryza sativa subsp. japonica (Rice) protein is Probable E3 ubiquitin-protein ligase XBOS33 (XBOS33).